Reading from the N-terminus, the 111-residue chain is C-type lectin lectoxin-Enh2 (111 aa).

Residues 1–23 (MGQFTVVSLGLLAMFLSLSGAKG) form the signal peptide. A disulfide bridge links cysteine 26 with cysteine 37. Positions 33–108 (RNGVCNKLFP…CASLHPFICQ (76 aa)) constitute a C-type lectin domain. A Mannose-binding motif is present at residues 72-74 (EPN). Ca(2+) contacts are provided by glutamate 80, asparagine 95, and aspartate 96. Residues cysteine 82 and cysteine 99 are joined by a disulfide bond.

The protein belongs to the true venom lectin family. In terms of tissue distribution, expressed by the venom gland.

It is found in the secreted. Functionally, mannose-binding lectin which recognizes specific carbohydrate structures and agglutinates a variety of animal cells by binding to cell-surface glycoproteins and glycolipids. May be a calcium-dependent lectin. This chain is C-type lectin lectoxin-Enh2, found in Pseudoferania polylepis (Macleay's water snake).